The sequence spans 316 residues: L-lactate dehydrogenase (316 aa).

NAD(+) contacts are provided by residues valine 16, aspartate 37, lysine 42, tyrosine 68, and 82-83 (GA). Substrate is bound by residues glutamine 85 and arginine 91. NAD(+) contacts are provided by residues serine 104, 121 to 123 (AAN), and serine 146. Residue 123 to 126 (NPVD) participates in substrate binding. Substrate is bound at residue 151-154 (DSAR). Arginine 156 and histidine 171 together coordinate beta-D-fructose 1,6-bisphosphate. The active-site Proton acceptor is histidine 178. Tyrosine 222 carries the post-translational modification Phosphotyrosine. Residue threonine 231 coordinates substrate.

Belongs to the LDH/MDH superfamily. LDH family. In terms of assembly, homotetramer.

It localises to the cytoplasm. It carries out the reaction (S)-lactate + NAD(+) = pyruvate + NADH + H(+). Its pathway is fermentation; pyruvate fermentation to lactate; (S)-lactate from pyruvate: step 1/1. With respect to regulation, allosterically activated by fructose 1,6-bisphosphate (FBP). Its function is as follows. Catalyzes the conversion of lactate to pyruvate. This is L-lactate dehydrogenase from Staphylococcus epidermidis (strain ATCC 12228 / FDA PCI 1200).